A 440-amino-acid polypeptide reads, in one-letter code: Chromosomal replication initiator protein DnaA (440 aa).

The segment at 1–74 (MNPSQILENL…VQSGNKAIIN (74 aa)) is domain I, interacts with DnaA modulators. A domain II region spans residues 74–99 (NIQAQSTKQSNKSTKIDIAHIQAQST). The tract at residues 100-316 (ILNPSFTFES…GIIISLNAYA (217 aa)) is domain III, AAA+ region. Residues Gly146, Gly148, Lys149, and Thr150 each contribute to the ATP site. Residues 317–440 (TILGQEITLE…KNKILIKSQS (124 aa)) are domain IV, binds dsDNA.

Belongs to the DnaA family. As to quaternary structure, oligomerizes as a right-handed, spiral filament on DNA at oriC.

Its subcellular location is the cytoplasm. Its function is as follows. Plays an essential role in the initiation and regulation of chromosomal replication. ATP-DnaA binds to the origin of replication (oriC) to initiate formation of the DNA replication initiation complex once per cell cycle. Binds the DnaA box (a 9 base pair repeat at the origin) and separates the double-stranded (ds)DNA. Forms a right-handed helical filament on oriC DNA; dsDNA binds to the exterior of the filament while single-stranded (ss)DNA is stabiized in the filament's interior. The ATP-DnaA-oriC complex binds and stabilizes one strand of the AT-rich DNA unwinding element (DUE), permitting loading of DNA polymerase. After initiation quickly degrades to an ADP-DnaA complex that is not apt for DNA replication. Binds acidic phospholipids. This Campylobacter jejuni subsp. doylei (strain ATCC BAA-1458 / RM4099 / 269.97) protein is Chromosomal replication initiator protein DnaA.